The primary structure comprises 214 residues: Phosphatidylcholine transfer protein (214 aa).

N-acetylmethionine is present on methionine 1. The START domain occupies 1–212; that stretch reads MAGAACCFSD…MVKACQNYHK (212 aa). The a 1,2-diacyl-sn-glycero-3-phosphocholine site is built by tyrosine 72 and arginine 78. Phosphoserine is present on serine 139. Residue glutamine 157 coordinates a 1,2-diacyl-sn-glycero-3-phosphocholine.

Interacts with ACOT13/THEM2. As to expression, abundant in liver of pups but levels in liver decrease 10-fold about 2 weeks after birth. In adult, highly expressed in epididymis, testis, kidney and bone-marrow derived mast cells.

It localises to the cytoplasm. In terms of biological role, catalyzes the transfer of phosphatidylcholine between membranes. Binds a single lipid molecule. The chain is Phosphatidylcholine transfer protein (Pctp) from Mus musculus (Mouse).